Here is a 313-residue protein sequence, read N- to C-terminus: Ribosomal RNA small subunit methyltransferase H (313 aa).

S-adenosyl-L-methionine-binding positions include 35-37, aspartate 55, phenylalanine 79, aspartate 100, and glutamine 107; that span reads GGH.

The protein belongs to the methyltransferase superfamily. RsmH family.

The protein localises to the cytoplasm. The enzyme catalyses cytidine(1402) in 16S rRNA + S-adenosyl-L-methionine = N(4)-methylcytidine(1402) in 16S rRNA + S-adenosyl-L-homocysteine + H(+). In terms of biological role, specifically methylates the N4 position of cytidine in position 1402 (C1402) of 16S rRNA. This Burkholderia ambifaria (strain MC40-6) protein is Ribosomal RNA small subunit methyltransferase H.